The sequence spans 259 residues: Protein-tyrosine phosphatase RolB (259 aa).

The tract at residues 219–259 (GISRPAASSPEPDLTLRLSGPDQEGEEGVMKPAAVNLKKEA) is disordered.

It catalyses the reaction O-phospho-L-tyrosyl-[protein] + H2O = L-tyrosyl-[protein] + phosphate. Induces differentiation and growth of neoplastic roots (hairy roots). Seems to function as a tyrosine phosphatase. This is Protein-tyrosine phosphatase RolB (rolB) from Rhizobium rhizogenes (Agrobacterium rhizogenes).